The chain runs to 329 residues: Malate dehydrogenase (329 aa).

12-18 (GAAGQIG) contributes to the NAD(+) binding site. Substrate contacts are provided by Arg-95 and Arg-101. NAD(+) contacts are provided by residues Asn-108, Gln-115, and 132-134 (VGN). Residues Asn-134 and Arg-165 each contribute to the substrate site. His-190 (proton acceptor) is an active-site residue.

Belongs to the LDH/MDH superfamily. MDH type 2 family.

The catalysed reaction is (S)-malate + NAD(+) = oxaloacetate + NADH + H(+). Catalyzes the reversible oxidation of malate to oxaloacetate. This Polynucleobacter necessarius subsp. necessarius (strain STIR1) protein is Malate dehydrogenase.